Consider the following 359-residue polypeptide: Src kinase-associated phosphoprotein 2 (359 aa).

A phosphoserine mark is found at Ser5, Ser6, and Ser9. The tract at residues 67–88 is disordered; sequence GDAEDGEEYDDPFAGPPDTISL. Tyr75 bears the Phosphotyrosine mark. Phosphoserine is present on residues Ser87 and Ser90. One can recognise a PH domain in the interval 116–219; that stretch reads FVLKAGYLEK…WVQQLKFVLQ (104 aa). 2 positions are modified to phosphotyrosine: Tyr151 and Tyr197. Ser223 bears the Phosphoserine mark. The residue at position 261 (Tyr261) is a Phosphotyrosine. A Phosphoserine modification is found at Ser286. Positions 297–358 constitute an SH3 domain; sequence DYANFYQGLW…PKAYIMEMYD (62 aa).

Belongs to the SKAP family. In terms of assembly, interacts with FYB1, which is required for SKAP2 protein stability. Interacts with PTPNS1. Part of a complex consisting of SKAP2, FYB1 and PTPNS1. Part of a complex consisting of SKAP2, FYB1 and LILRB3. Interacts with LAT, GRB2, PTK2B, and PRAM1. May interact with actin. May interact with FYN, HCK and LYN. Interacts with FASLG.

It is found in the cytoplasm. May be involved in B-cell and macrophage adhesion processes. In B-cells, may act by coupling the B-cell receptor (BCR) to integrin activation. May play a role in src signaling pathway. The sequence is that of Src kinase-associated phosphoprotein 2 (SKAP2) from Pongo abelii (Sumatran orangutan).